The chain runs to 253 residues: Diphthine synthase (253 aa).

Residues D83, L86, 111-112 (SI), L163, and L205 each bind S-adenosyl-L-methionine.

It belongs to the diphthine synthase family. As to quaternary structure, homodimer.

It carries out the reaction 2-[(3S)-amino-3-carboxypropyl]-L-histidyl-[translation elongation factor 2] + 3 S-adenosyl-L-methionine = diphthine-[translation elongation factor 2] + 3 S-adenosyl-L-homocysteine + 3 H(+). The protein operates within protein modification; peptidyl-diphthamide biosynthesis. Its function is as follows. S-adenosyl-L-methionine-dependent methyltransferase that catalyzes the trimethylation of the amino group of the modified target histidine residue in translation elongation factor 2 (EF-2), to form an intermediate called diphthine. The three successive methylation reactions represent the second step of diphthamide biosynthesis. The sequence is that of Diphthine synthase from Pyrobaculum neutrophilum (strain DSM 2338 / JCM 9278 / NBRC 100436 / V24Sta) (Thermoproteus neutrophilus).